A 280-amino-acid chain; its full sequence is uncharacterized protein (280 aa).

Positions 1 to 35 (MQGQVLKKVLKKYVHIGMCTLFLHAILLFPCVAQA) are cleaved as a signal peptide.

This is an uncharacterized protein from Treponema pallidum (strain Nichols).